The sequence spans 249 residues: MTDQPPPSGSNPTPAPPPPGSSGGYEPSFAPSELGSAYPPPTAPPVGGSYPPPPPPGGSYPPPPPPGGSYPPPPPSTGAYAPPPPGPAIRSLPKEAYTFWVTRVLAYVIDNIPATVLLGIGMLIQTLTKQEACVTDITQYNVNQYCATQPTGIGMLAFWFAWLMATAYLVWNYGYRQGATGSSIGKTVMKFKVISEATGQPIGFGMSVVRQLAHFVDAVICCIGFLFPLWDSKRQTLADKIMTTVCLPI.

2 stretches are compositionally biased toward pro residues: residues 1 to 20 and 38 to 87; these read MTDQPPPSGSNPTPAPPPPG and YPPP…PPGP. A disordered region spans residues 1–87; sequence MTDQPPPSGS…GAYAPPPPGP (87 aa). Residues 34–43 form a 1-1; approximate repeat; it reads LGSAYPPPTA. A 5 X 10 AA tandem repeats of [PV]-G-G-S-Y-P-P-P-P-P region spans residues 34–85; sequence LGSAYPPPTAPPVGGSYPPPPPPGGSYPPPPPPGGSYPPPPPSTGAYAPPPP. 3 repeat units span residues 46 to 55, 56 to 65, and 66 to 75. A 1-5; approximate repeat occupies 76 to 85; sequence STGAYAPPPP. Residues 99 to 242 enclose the RDD domain; sequence FWVTRVLAYV…KRQTLADKIM (144 aa). 2 tandem repeats follow at residues 101-123 and 134-156. Residues 101–156 form a 2 X 23 AA approximate repeats region; the sequence is VTRVLAYVIDNIPATVLLGIGMLIQTLTKQEACVTDITQYNVNQYCATQPTGIGML. Transmembrane regions (helical) follow at residues 104-124, 151-171, and 212-232; these read VLAYVIDNIPATVLLGIGMLI, TGIGMLAFWFAWLMATAYLVW, and LAHFVDAVICCIGFLFPLWDS.

It belongs to the mycobacterial Pra family.

The protein localises to the cell membrane. This is Proline-rich antigen (ag36) from Mycobacterium leprae (strain TN).